The chain runs to 410 residues: MNKQSWLLNLSLLKTHPAFRAVFLARFISIVSLGLLGVAVPVQIQMMTHSTWQVGLSVTLTGGAMFVGLMVGGVLADRYERKKVILLARGTCGIGFIGLCLNALLPEPSLLAIYLLGLWDGFFASLGVTALLAATSALVGRENLMQAGAITMLTVRLGSVISPMIGGLLLATGGVAWNYGLAAAGTFITLLPLLSLPELPPPPQPLEHPLKSLLAGFRFLLASPLLGGLLTMASAVLVLYPALADNWQMSAAQIGFLYAAIPLGAAIGALTSGKLAHSARPGLLMLLSTLGSFLAIGLFGLMPMWILGVVCLALFGWLSAVSSLLQYTMLQTQTPEAMLGRINGLWTAQNVTGDAIGAALLGGLGAMMTPVASASASGFGLLIIGVLLLLVLVELRRFRQTPPQVTASDS.

The Cytoplasmic segment spans residues Met1–Ala21. Residues Val22–Val42 traverse the membrane as a helical segment. The Periplasmic portion of the chain corresponds to Gln43 to Gly55. Residues Leu56–Ala76 form a helical membrane-spanning segment. The Cytoplasmic portion of the chain corresponds to Asp77–Lys83. Residues Val84–Leu104 traverse the membrane as a helical segment. The Periplasmic portion of the chain corresponds to Leu105–Ser109. Residues Leu110–Ala130 traverse the membrane as a helical segment. At Leu131–Arg156 the chain is on the cytoplasmic side. The helical transmembrane segment at Leu157–Trp177 threads the bilayer. Asn178 is a topological domain (periplasmic). The chain crosses the membrane as a helical span at residues Tyr179 to Leu199. The Cytoplasmic portion of the chain corresponds to Pro200–Arg218. The helical transmembrane segment at Phe219–Ala233 threads the bilayer. Residues Ser234–Ser250 lie on the Periplasmic side of the membrane. Residues Ala251 to Thr271 traverse the membrane as a helical segment. Residues Ser272–Pro281 lie on the Cytoplasmic side of the membrane. A helical transmembrane segment spans residues Gly282–Leu301. Residues Met302–Leu307 are Periplasmic-facing. A helical membrane pass occupies residues Gly308–Leu330. Residues Gln331–Asn350 are Cytoplasmic-facing. The helical transmembrane segment at Val351–Val371 threads the bilayer. Ala372 is a topological domain (periplasmic). The helical transmembrane segment at Ser373–Val393 threads the bilayer. At Glu394–Ser410 the chain is on the cytoplasmic side.

Belongs to the major facilitator superfamily. EntS (TC 2.A.1.38) family.

The protein resides in the cell inner membrane. In terms of biological role, component of an export pathway for enterobactin. This is Enterobactin exporter EntS from Shigella flexneri.